The primary structure comprises 371 residues: Transaldolase (371 aa).

The Schiff-base intermediate with substrate role is filled by K140.

The protein belongs to the transaldolase family. Type 2 subfamily.

It localises to the cytoplasm. It carries out the reaction D-sedoheptulose 7-phosphate + D-glyceraldehyde 3-phosphate = D-erythrose 4-phosphate + beta-D-fructose 6-phosphate. It participates in carbohydrate degradation; pentose phosphate pathway; D-glyceraldehyde 3-phosphate and beta-D-fructose 6-phosphate from D-ribose 5-phosphate and D-xylulose 5-phosphate (non-oxidative stage): step 2/3. Its function is as follows. Transaldolase is important for the balance of metabolites in the pentose-phosphate pathway. This chain is Transaldolase, found in Arthrobacter sp. (strain FB24).